Consider the following 449-residue polypeptide: N-succinylarginine dihydrolase (449 aa).

Residues 19–28 (GGLSYGNVAS), asparagine 110, and 137–138 (HR) contribute to the substrate site. The tract at residues 23–43 (YGNVASQSNSQQASNPREAAR) is disordered. Positions 27–37 (ASQSNSQQASN) are enriched in low complexity. The active site involves glutamate 174. Arginine 214 is a substrate binding site. Histidine 250 is a catalytic residue. Substrate-binding residues include aspartate 252 and asparagine 365. Catalysis depends on cysteine 371, which acts as the Nucleophile.

It belongs to the succinylarginine dihydrolase family. In terms of assembly, homodimer.

The enzyme catalyses N(2)-succinyl-L-arginine + 2 H2O + 2 H(+) = N(2)-succinyl-L-ornithine + 2 NH4(+) + CO2. The protein operates within amino-acid degradation; L-arginine degradation via AST pathway; L-glutamate and succinate from L-arginine: step 2/5. Its function is as follows. Catalyzes the hydrolysis of N(2)-succinylarginine into N(2)-succinylornithine, ammonia and CO(2). The sequence is that of N-succinylarginine dihydrolase from Pseudomonas putida (strain ATCC 700007 / DSM 6899 / JCM 31910 / BCRC 17059 / LMG 24140 / F1).